The sequence spans 716 residues: MGETKIIYHLDGQETPYLVKLPLPAERVTLADFKGVLQRPSYKFFFKSMDDDFGVVKEEISDDNAKLPCFNGRVVSWLVSAEGSHPEPAPFCADNPSELPPSMERTGGIGDSRPPSFHPHASGGSQENLDNDTETDSLVSAQRERPRRRDGPEHAARLNGTTKGERRREPGGYDSSSTLMSSELETTSFFDSDEDDSTSRFSSSTEQSSASRLMRRHKRRRRKQKVSRIERSSSFSSITDSTMSLNIITVTLNMEKYNFLGISIVGQSNERGDGGIYIGSIMKGGAVAADGRIEPGDMLLQVNEINFENMSNDDAVRVLREIVHKPGPITLTVAKCWDPSPRGCFTLPRSEPIRPIDPAAWVSHTAAMTGTFPAYGMSPSLSTITSTSSSITSSIPDTERLDDFHLSIHSDMAAIVKAMASPESGLEVRDRMWLKITIPNAFIGSDVVDWLYHNVEGFTDRREARKYASNLLKAGFIRHTVNKITFSEQCYYIFGDLCGNMANLSLHDHDGSSGASDQDTLAPLPHPGAAPWPMAFPYQYPPPPHPYNPHPGFPELGYSYGGGSASSQHSEGSRSSGSNRSGSDRRKEKDPKAGDSKSGGSGSESDHTTRSSLRGPRERAPSERSGPAASEHSHRSHHSLTSSLRSHHTHPSYGPPGVPPLYGPPMLMMTPPPAAMGPPGAPPGRDLASVPPELTASRQSFRMAMGNPSEFFVDVM.

The DIX domain maps to 1 to 82 (MGETKIIYHL…RVVSWLVSAE (82 aa)). Arg-27 carries the omega-N-methylarginine modification. 2 positions are modified to phosphoserine: Ser-48 and Ser-125. The disordered stretch occupies residues 85 to 235 (HPEPAPFCAD…VSRIERSSSF (151 aa)). Positions 142 to 156 (QRERPRRRDGPEHAA) are enriched in basic and acidic residues. The segment covering 175-190 (SSSTLMSSELETTSFF) has biased composition (low complexity). The residue at position 192 (Ser-192) is a Phosphoserine. Residues 199–212 (SRFSSSTEQSSASR) show a composition bias toward low complexity. Arg-212 is modified (omega-N-methylarginine). The segment covering 213 to 226 (LMRRHKRRRRKQKV) has biased composition (basic residues). The region spanning 249–321 (TVTLNMEKYN…NDDAVRVLRE (73 aa)) is the PDZ domain. An Asymmetric dimethylarginine; by PRMT1; alternate modification is found at Arg-271. Residues Arg-271 and Arg-342 each carry the symmetric dimethylarginine; by PRMT7; alternate modification. At Arg-342 the chain carries Omega-N-methylarginine; alternate. At Thr-346 the chain carries Phosphothreonine. A DEP domain is found at 422–496 (PESGLEVRDR…SEQCYYIFGD (75 aa)). Residues 546-691 (PYNPHPGFPE…PPGRDLASVP (146 aa)) are disordered. Residues 565-581 (ASSQHSEGSRSSGSNRS) are compositionally biased toward low complexity. Composition is skewed to basic and acidic residues over residues 582–595 (GSDRRKEKDPKAGD) and 604–622 (ESDHTTRSSLRGPRERAPS). Residue Arg-614 is modified to Symmetric dimethylarginine; by PRMT7. Composition is skewed to pro residues over residues 653-663 (YGPPGVPPLYG) and 670-682 (TPPPAAMGPPGAP). Ser-697 carries the phosphoserine modification. Arg-698 carries the omega-N-methylarginine; alternate modification. A Dimethylated arginine; alternate modification is found at Arg-698. Ser-700 carries the phosphoserine modification.

The protein belongs to the DSH family. As to quaternary structure, interacts (via the PDZ domain) with the C-terminal regions of VANGL1 and VANGL2. Interacts (via the region containing both the PDZ and DEP domains) with LRRFIP2; the DIX domain may inhibit this interaction. Interacts with CYLD. Interacts with CEP164 and DAB2. Interacts with DCDC2. Interacts with FOXK1 and FOXK2. Interacts with DAAM2. In terms of processing, ubiquitinated. Deubiquitinated by CYLD, which acts on 'Lys-63'-linked ubiquitin chains. Post-translationally, phosphorylated by CSNK1D. Arginine methylation may function as a switch in regulation of function in Wnt signaling. In terms of tissue distribution, ubiquitous.

The protein localises to the cytoplasm. Its function is as follows. Involved in the signal transduction pathway mediated by multiple Wnt genes. In Mus musculus (Mouse), this protein is Segment polarity protein dishevelled homolog DVL-3 (Dvl3).